A 1210-amino-acid polypeptide reads, in one-letter code: Microtubule-associated tumor suppressor 1 homolog (1210 aa).

Disordered regions lie at residues 1–21, 370–404, 446–482, 513–545, and 585–618; these read MNDD…IRDK, DPHI…PYEM, VENG…NTTV, QPKD…LTMM, and HSKN…AGSE. Residues 370–379 show a composition bias toward basic and acidic residues; the sequence is DPHIDSHDND. A phosphoserine mark is found at S375, S380, and S393. Over residues 381-398 the composition is skewed to polar residues; the sequence is DIQSSTEELTLRSVSGQR. Positions 446–455 are enriched in basic and acidic residues; it reads VENGPRDAKR. Residues 473–482 are compositionally biased toward polar residues; sequence KSATKTNTTV. The span at 524 to 534 shows a compositional bias: low complexity; sequence PSPQVTGGSSP. Over residues 585–605 the composition is skewed to polar residues; sequence HSKNASLGVPRTTSATKSNQE. S621 carries the post-translational modification Phosphoserine. Residues 683–771 are disordered; sequence SKSLLVGSAP…YEEKPPKQAF (89 aa). Residues 692-702 are compositionally biased toward polar residues; the sequence is PKTSTTPGRSS. Residues 876-1171 adopt a coiled-coil conformation; that stretch reads IQHLLSEREE…RLSMENEELL (296 aa). 9 positions are modified to phosphoserine: S1143, S1164, S1185, S1195, S1199, S1201, S1203, S1204, and S1208. The interval 1177-1210 is disordered; that stretch reads GDLCSPKRSPTSSAIPFQSPRNSGSFSSPSISPR. Over residues 1195 to 1210 the composition is skewed to low complexity; the sequence is SPRNSGSFSSPSISPR.

It belongs to the MTUS1 family. Homodimer. Interacts with AGTR2. Interacts with PTPN6. In terms of tissue distribution, ubiquitously expressed, with highest levels in uterus and adrenal gland.

It localises to the mitochondrion. It is found in the golgi apparatus. The protein resides in the cell membrane. The protein localises to the nucleus. Cooperates with AGTR2 to inhibit ERK2 activation and cell proliferation. May be required for AGTR2 cell surface expression. Together with PTPN6, induces UBE2V2 expression upon angiotensin-II stimulation. This Mus musculus (Mouse) protein is Microtubule-associated tumor suppressor 1 homolog (Mtus1).